A 413-amino-acid polypeptide reads, in one-letter code: Large ribosomal subunit protein uL4 (413 aa).

Ala-2 carries the N-acetylalanine modification. Lys-14 carries the N6-acetyllysine modification. Omega-N-methylarginine is present on Arg-97. Lys-106 bears the N6-acetyllysine mark. Lys-239 participates in a covalent cross-link: Glycyl lysine isopeptide (Lys-Gly) (interchain with G-Cter in SUMO2). N6-acetyllysine is present on Lys-259. At Thr-266 the chain carries Phosphothreonine. Ser-290 and Ser-295 each carry phosphoserine. The residue at position 300 (Arg-300) is a Citrulline. A Glycyl lysine isopeptide (Lys-Gly) (interchain with G-Cter in SUMO2) cross-link involves residue Lys-327. An N6-acetyllysine modification is found at Lys-333. Positions 355–413 are disordered; the sequence is AAALAAKSDPKEAPAKKKPVVGKKKKPVVGRKAAAAKKPAADKKAADKRAGPEDKKPAA. An N6-acetyllysine; alternate modification is found at Lys-361. Lys-361 participates in a covalent cross-link: Glycyl lysine isopeptide (Lys-Gly) (interchain with G-Cter in SUMO1); alternate. Ser-362 carries the phosphoserine modification. Basic residues predominate over residues 370 to 383; it reads KKKPVVGKKKKPVV. Residues 393 to 413 show a composition bias toward basic and acidic residues; the sequence is PAADKKAADKRAGPEDKKPAA.

Belongs to the universal ribosomal protein uL4 family. As to quaternary structure, component of the large ribosomal subunit. May bind IPO9 with low affinity. Interacts with RBM3. Citrullinated by PADI4.

The protein resides in the cytoplasm. Its function is as follows. Component of the large ribosomal subunit. The ribosome is a large ribonucleoprotein complex responsible for the synthesis of proteins in the cell. This chain is Large ribosomal subunit protein uL4 (RPL4), found in Oryctolagus cuniculus (Rabbit).